The sequence spans 228 residues: Large ribosomal subunit protein bL25 (228 aa).

Positions 196–228 (EEAAVAEAQSAESAEGKAEAEAEATNEKNKSEA) are disordered. The segment covering 209 to 228 (AEGKAEAEAEATNEKNKSEA) has biased composition (basic and acidic residues).

It belongs to the bacterial ribosomal protein bL25 family. CTC subfamily. Part of the 50S ribosomal subunit; part of the 5S rRNA/L5/L18/L25 subcomplex. Contacts the 5S rRNA. Binds to the 5S rRNA independently of L5 and L18.

Functionally, this is one of the proteins that binds to the 5S RNA in the ribosome where it forms part of the central protuberance. The chain is Large ribosomal subunit protein bL25 from Methylorubrum extorquens (strain CM4 / NCIMB 13688) (Methylobacterium extorquens).